Consider the following 428-residue polypeptide: Elongation factor 1-alpha (428 aa).

One can recognise a tr-type G domain in the interval 5 to 215 (KPHVNIVFIG…ALDQIPEPPK (211 aa)). Positions 14–21 (GHVDHGKS) are G1. A GTP-binding site is contributed by 14–21 (GHVDHGKS). Ser21 contacts Mg(2+). Positions 68–72 (GITID) are G2. The tract at residues 89–92 (DAPG) is G3. GTP contacts are provided by residues 89 to 93 (DAPGH) and 144 to 147 (NKMD). Residues 144 to 147 (NKMD) form a G4 region. The G5 stretch occupies residues 181-183 (SAW).

This sequence belongs to the TRAFAC class translation factor GTPase superfamily. Classic translation factor GTPase family. EF-Tu/EF-1A subfamily.

It is found in the cytoplasm. The enzyme catalyses GTP + H2O = GDP + phosphate + H(+). Functionally, GTP hydrolase that promotes the GTP-dependent binding of aminoacyl-tRNA to the A-site of ribosomes during protein biosynthesis. This chain is Elongation factor 1-alpha, found in Thermococcus kodakarensis (strain ATCC BAA-918 / JCM 12380 / KOD1) (Pyrococcus kodakaraensis (strain KOD1)).